The sequence spans 265 residues: GTP cyclohydrolase 1 type 2 homolog (265 aa).

4 residues coordinate a divalent metal cation: histidine 65, aspartate 103, histidine 225, and glutamate 228.

Belongs to the GTP cyclohydrolase I type 2/NIF3 family. In terms of assembly, homohexamer.

This chain is GTP cyclohydrolase 1 type 2 homolog, found in Streptococcus pneumoniae serotype 4 (strain ATCC BAA-334 / TIGR4).